The primary structure comprises 157 residues: Crossover junction endodeoxyribonuclease RuvC (157 aa).

Residues Asp7, Glu66, and Asp139 contribute to the active site. Mg(2+) contacts are provided by Asp7, Glu66, and Asp139.

It belongs to the RuvC family. In terms of assembly, homodimer which binds Holliday junction (HJ) DNA. The HJ becomes 2-fold symmetrical on binding to RuvC with unstacked arms; it has a different conformation from HJ DNA in complex with RuvA. In the full resolvosome a probable DNA-RuvA(4)-RuvB(12)-RuvC(2) complex forms which resolves the HJ. The cofactor is Mg(2+).

The protein resides in the cytoplasm. The catalysed reaction is Endonucleolytic cleavage at a junction such as a reciprocal single-stranded crossover between two homologous DNA duplexes (Holliday junction).. In terms of biological role, the RuvA-RuvB-RuvC complex processes Holliday junction (HJ) DNA during genetic recombination and DNA repair. Endonuclease that resolves HJ intermediates. Cleaves cruciform DNA by making single-stranded nicks across the HJ at symmetrical positions within the homologous arms, yielding a 5'-phosphate and a 3'-hydroxyl group; requires a central core of homology in the junction. The consensus cleavage sequence is 5'-(A/T)TT(C/G)-3'. Cleavage occurs on the 3'-side of the TT dinucleotide at the point of strand exchange. HJ branch migration catalyzed by RuvA-RuvB allows RuvC to scan DNA until it finds its consensus sequence, where it cleaves and resolves the cruciform DNA. Required for efficient infection in a mouse model system. This is Crossover junction endodeoxyribonuclease RuvC from Helicobacter pylori (strain G27).